Consider the following 549-residue polypeptide: Chaperonin GroEL (549 aa).

Residues threonine 29–proline 32, lysine 50, aspartate 86–threonine 90, glycine 417, and aspartate 499 each bind ATP.

The protein belongs to the chaperonin (HSP60) family. In terms of assembly, forms a cylinder of 14 subunits composed of two heptameric rings stacked back-to-back. Interacts with the co-chaperonin GroES.

The protein resides in the cytoplasm. It catalyses the reaction ATP + H2O + a folded polypeptide = ADP + phosphate + an unfolded polypeptide.. Functionally, together with its co-chaperonin GroES, plays an essential role in assisting protein folding. The GroEL-GroES system forms a nano-cage that allows encapsulation of the non-native substrate proteins and provides a physical environment optimized to promote and accelerate protein folding. This Anaplasma marginale (strain Florida) protein is Chaperonin GroEL.